Consider the following 401-residue polypeptide: Imidazolonepropionase (401 aa).

Fe(3+)-binding residues include H66 and H68. H66 and H68 together coordinate Zn(2+). 4-imidazolone-5-propanoate-binding residues include R75, Y138, and H171. Residue Y138 participates in N-formimidoyl-L-glutamate binding. H236 provides a ligand contact to Fe(3+). Residue H236 participates in Zn(2+) binding. Q239 lines the 4-imidazolone-5-propanoate pocket. D311 is a binding site for Fe(3+). Zn(2+) is bound at residue D311. The N-formimidoyl-L-glutamate site is built by N313 and G315. T316 serves as a coordination point for 4-imidazolone-5-propanoate.

It belongs to the metallo-dependent hydrolases superfamily. HutI family. Requires Zn(2+) as cofactor. Fe(3+) is required as a cofactor.

Its subcellular location is the cytoplasm. The enzyme catalyses 4-imidazolone-5-propanoate + H2O = N-formimidoyl-L-glutamate. The protein operates within amino-acid degradation; L-histidine degradation into L-glutamate; N-formimidoyl-L-glutamate from L-histidine: step 3/3. Catalyzes the hydrolytic cleavage of the carbon-nitrogen bond in imidazolone-5-propanoate to yield N-formimidoyl-L-glutamate. It is the third step in the universal histidine degradation pathway. The chain is Imidazolonepropionase from Acinetobacter baumannii (strain ATCC 17978 / DSM 105126 / CIP 53.77 / LMG 1025 / NCDC KC755 / 5377).